Consider the following 672-residue polypeptide: COBRA-like protein 10 (672 aa).

Positions 1-35 are cleaved as a signal peptide; sequence MRAIDVKTGMKIPWDVRYSLSLFIFLSSILFLSNG. N-linked (GlcNAc...) asparagine glycans are attached at residues Asn-79, Asn-135, Asn-264, Asn-328, Asn-339, Asn-368, Asn-422, Asn-442, Asn-483, Asn-562, Asn-570, and Asn-589. The region spanning 502–607 is the CBM2 domain; the sequence is KLPCPDNCGV…PVPGKQQSVI (106 aa). Ser-646 is lipidated: GPI-anchor amidated serine. The propeptide at 647–672 is removed in mature form; the sequence is SGHRRGISVSMSFVFATIAAFALMMD. Residues 664 to 672 carry the Required for processing by the PIG complex, a critical step for apical plasma membrane localization in pollen tubes motif; it reads IAAFALMMD.

It belongs to the COBRA family. Post-translationally, the GPI-anchor attachment at Ser-646 requires APTG1. In terms of tissue distribution, expressed in roots, stems, leaves, flowers and siliques. Specific expression in the pollen tube.

It is found in the cell membrane. The protein localises to the cytoplasm. Its subcellular location is the vesicle. In terms of biological role, involved in the deposition of apical pectin cap and cellulose microfibrils in pollen tubes. Not essential for pollen development, hydration or germination, but required for pollen tubes growth in the female transmitting tract of pistil and toward micropyles, via the perception of ovule guidance cues. This chain is COBRA-like protein 10, found in Arabidopsis thaliana (Mouse-ear cress).